A 382-amino-acid chain; its full sequence is Galactokinase (382 aa).

Substrate is bound at residue 34 to 37; that stretch reads EHTD. An ATP-binding site is contributed by 124–130; it reads GAGLSSS. Residues Ser130 and Glu162 each contribute to the Mg(2+) site. Asp174 (proton acceptor) is an active-site residue. Tyr223 contributes to the substrate binding site.

It belongs to the GHMP kinase family. GalK subfamily.

It is found in the cytoplasm. The catalysed reaction is alpha-D-galactose + ATP = alpha-D-galactose 1-phosphate + ADP + H(+). The protein operates within carbohydrate metabolism; galactose metabolism. Functionally, catalyzes the transfer of the gamma-phosphate of ATP to D-galactose to form alpha-D-galactose-1-phosphate (Gal-1-P). This Escherichia coli O127:H6 (strain E2348/69 / EPEC) protein is Galactokinase.